The chain runs to 157 residues: MPRRREVPKRDVLPDPKFGSVELTKFMNALMVDGKKSVDERIVYGALEQTAKKVQGKEAIEVFNEAIDNAKPIVEVKSRRVGGANYQVPVEVRPSRRLALAMRWVRDAARKRGEKSMDLRLADELIDAAEGRGGAMKKREEVHRMAEANKAFSHFRF.

The protein belongs to the universal ribosomal protein uS7 family. As to quaternary structure, part of the 30S ribosomal subunit. Contacts proteins S9 and S11.

One of the primary rRNA binding proteins, it binds directly to 16S rRNA where it nucleates assembly of the head domain of the 30S subunit. Is located at the subunit interface close to the decoding center, probably blocks exit of the E-site tRNA. This is Small ribosomal subunit protein uS7 from Eikenella corrodens.